Consider the following 186-residue polypeptide: Ribosome-recycling factor (186 aa).

It belongs to the RRF family.

Its subcellular location is the cytoplasm. In terms of biological role, responsible for the release of ribosomes from messenger RNA at the termination of protein biosynthesis. May increase the efficiency of translation by recycling ribosomes from one round of translation to another. In Rickettsia massiliae (strain Mtu5), this protein is Ribosome-recycling factor.